The chain runs to 147 residues: 3-dehydroquinate dehydratase (147 aa).

Catalysis depends on Tyr24, which acts as the Proton acceptor. Substrate-binding residues include Asn75, His81, and Asp88. His101 functions as the Proton donor in the catalytic mechanism. Substrate-binding positions include 102–103 (IS) and Arg112.

It belongs to the type-II 3-dehydroquinase family. In terms of assembly, homododecamer.

It carries out the reaction 3-dehydroquinate = 3-dehydroshikimate + H2O. It participates in metabolic intermediate biosynthesis; chorismate biosynthesis; chorismate from D-erythrose 4-phosphate and phosphoenolpyruvate: step 3/7. Its function is as follows. Catalyzes a trans-dehydration via an enolate intermediate. The protein is 3-dehydroquinate dehydratase of Cereibacter sphaeroides (strain ATCC 17029 / ATH 2.4.9) (Rhodobacter sphaeroides).